A 493-amino-acid polypeptide reads, in one-letter code: Galactose-1-phosphate uridylyltransferase (493 aa).

It belongs to the galactose-1-phosphate uridylyltransferase type 2 family.

Its subcellular location is the cytoplasm. The enzyme catalyses alpha-D-galactose 1-phosphate + UDP-alpha-D-glucose = alpha-D-glucose 1-phosphate + UDP-alpha-D-galactose. It functions in the pathway carbohydrate metabolism; galactose metabolism. The protein is Galactose-1-phosphate uridylyltransferase of Streptococcus salivarius.